The primary structure comprises 300 residues: Tegument protein VP22 (300 aa).

The interval 1-148 is disordered; that stretch reads MTSRRSVKSC…PARGRRPAQA (148 aa). Composition is skewed to basic and acidic residues over residues 10–22 and 50–61; these read CPRE…HEEL and PRGEVRFLHYDE. Residues 163 to 166 carry the Nuclear localization signal motif; that stretch reads GRTK. The interval 174-267 is interaction with gE; sequence KKLHFSTAPP…LVNPDAAQDV (94 aa). Residues 232–244 carry the Nuclear export signal motif; that stretch reads LNELLDLTTIRVT. Low complexity predominate over residues 269–292; it reads ATAAARGRPAGRAAATARAPARSA. The disordered stretch occupies residues 269 to 300; that stretch reads ATAAARGRPAGRAAATARAPARSASRPRRPLE.

The protein belongs to the alphaherpesvirinae VP22 tegument protein family. Interacts with gE (via C-terminus); this interaction is necessary for the recruitment of VP22 to the Golgi and its packaging into virions. Interacts with gM (via C-terminus). Interacts with VP16; this interaction allows the formation of a tripartite complex composed of VP16, VP22 and UL41/VHS. Interacts with the capsid-binding protein UL16. Interacts with host CGAS. Highly phosphorylated in the host cell. Packaging is selective for underphosphorylated forms.

Its subcellular location is the virion tegument. The protein localises to the host cytoplasm. The protein resides in the host nucleus. It localises to the host Golgi apparatus. In terms of biological role, tegument protein that plays different roles during the time course of infection. Participates in both the accumulation of viral mRNAs and viral protein translation at late time of infection. Modulates the RNase activity of the virion host shutoff protein UL41 probably to ensure necessary levels of key cellular mRNAs and proteins. Plays a role in microtubule reorganization that occurs after viral infection by stabilizing microtubule network. Plays a role in the inhibition of host innate immune system by targeting the CGAS enzymatic activity which is the principal cytosolic DNA sensor that detects invading viral DNA. Acts by mediating disruption of liquid-like droplets in which CGAS is activated, thereby preventing CGAS activity. The protein is Tegument protein VP22 of Homo sapiens (Human).